We begin with the raw amino-acid sequence, 175 residues long: MNATCCILALLLCLTQAISGCYCQGTLIEEIENLKKHFNSSSSDVGDGGELVLDIWRNWQKDGDIKIIESQIISFYFKLFDALKDNQAIQESIGTIEQDLLVHFFNSSEEKRDDFMKVMKIPVDDPQVQRKAVNELLGVMYRLSPKNSLRKRKRSRCCFGGGARPNKNNAASKTI.

A signal peptide spans 1–23 (MNATCCILALLLCLTQAISGCYC). At Gln-24 the chain carries Pyrrolidone carboxylic acid. Residues Asn-39 and Asn-106 are each glycosylated (N-linked (GlcNAc...) asparagine).

Belongs to the type II (or gamma) interferon family. Homodimer. Interacts with IFNGR1 (via extracellular domain); this interaction promotes IFNGR1 dimerization. Released primarily from activated T lymphocytes.

It is found in the secreted. Type II interferon produced by immune cells such as T-cells and NK cells that plays crucial roles in antimicrobial, antiviral, and antitumor responses by activating effector immune cells and enhancing antigen presentation. Primarily signals through the JAK-STAT pathway after interaction with its receptor IFNGR1 to affect gene regulation. Upon IFNG binding, IFNGR1 intracellular domain opens out to allow association of downstream signaling components JAK2, JAK1 and STAT1, leading to STAT1 activation, nuclear translocation and transcription of IFNG-regulated genes. Many of the induced genes are transcription factors such as IRF1 that are able to further drive regulation of a next wave of transcription. Plays a role in class I antigen presentation pathway by inducing a replacement of catalytic proteasome subunits with immunoproteasome subunits. In turn, increases the quantity, quality, and repertoire of peptides for class I MHC loading. Increases the efficiency of peptide generation also by inducing the expression of activator PA28 that associates with the proteasome and alters its proteolytic cleavage preference. Up-regulates as well MHC II complexes on the cell surface by promoting expression of several key molecules such as cathepsins B/CTSB, H/CTSH, and L/CTSL. Participates in the regulation of hematopoietic stem cells during development and under homeostatic conditions by affecting their development, quiescence, and differentiation. This is Interferon gamma (IFNG) from Peromyscus maniculatus (North American deer mouse).